Here is a 438-residue protein sequence, read N- to C-terminus: Transposon Ty2-OR2 Gag polyprotein (438 aa).

Disordered regions lie at residues 1 to 88 (MESQ…YQQH), 365 to 397 (NVSR…AKAH), and 419 to 438 (SSQY…TERI). Composition is skewed to polar residues over residues 19–39 (ASVT…SASN) and 49–60 (KVNSQEETTPGT). Residues 295 to 397 (ENNINVSDRL…SSKPRAAKAH (103 aa)) are RNA-binding. Low complexity predominate over residues 369 to 381 (TSPNTTNTKVTTR).

In terms of assembly, homotrimer.

The protein localises to the cytoplasm. In terms of biological role, capsid protein (CA) is the structural component of the virus-like particle (VLP), forming the shell that encapsulates the retrotransposons dimeric RNA genome. The particles are assembled from trimer-clustered units and there are holes in the capsid shells that allow for the diffusion of macromolecules. CA also has nucleocapsid-like chaperone activity, promoting primer tRNA(i)-Met annealing to the multipartite primer-binding site (PBS), dimerization of Ty2 RNA and initiation of reverse transcription. This is Transposon Ty2-OR2 Gag polyprotein (TY2A-OR2) from Saccharomyces cerevisiae (strain ATCC 204508 / S288c) (Baker's yeast).